The sequence spans 1040 residues: Beta-galactosidase (1040 aa).

Substrate contacts are provided by Asn111 and Asp210. Na(+) is bound at residue Asp210. Mg(2+) is bound by residues Glu427, His429, and Glu472. Substrate contacts are provided by residues Glu472 and 548-551 (EYAH). The active-site Proton donor is the Glu472. The active-site Nucleophile is Glu548. Position 608 (Asn608) interacts with Mg(2+). Na(+) contacts are provided by Phe612 and Asp615. Residues Asp615 and Trp1016 each coordinate substrate.

This sequence belongs to the glycosyl hydrolase 2 family. Homotetramer. Requires Mg(2+) as cofactor. Na(+) is required as a cofactor.

It carries out the reaction Hydrolysis of terminal non-reducing beta-D-galactose residues in beta-D-galactosides.. The chain is Beta-galactosidase from Pectobacterium atrosepticum (strain SCRI 1043 / ATCC BAA-672) (Erwinia carotovora subsp. atroseptica).